Consider the following 217-residue polypeptide: ATP phosphoribosyltransferase (217 aa).

This sequence belongs to the ATP phosphoribosyltransferase family. Short subfamily. Heteromultimer composed of HisG and HisZ subunits.

The protein localises to the cytoplasm. It catalyses the reaction 1-(5-phospho-beta-D-ribosyl)-ATP + diphosphate = 5-phospho-alpha-D-ribose 1-diphosphate + ATP. The protein operates within amino-acid biosynthesis; L-histidine biosynthesis; L-histidine from 5-phospho-alpha-D-ribose 1-diphosphate: step 1/9. Catalyzes the condensation of ATP and 5-phosphoribose 1-diphosphate to form N'-(5'-phosphoribosyl)-ATP (PR-ATP). Has a crucial role in the pathway because the rate of histidine biosynthesis seems to be controlled primarily by regulation of HisG enzymatic activity. This is ATP phosphoribosyltransferase from Burkholderia orbicola (strain AU 1054).